We begin with the raw amino-acid sequence, 89 residues long: Teretoxin Tan22.12 (89 aa).

The N-terminal stretch at 1-22 (MKVLFTLAMIVVTLCLGQRMRR) is a signal peptide.

Belongs to the teretoxin C (TC) superfamily. Contains 4 disulfide bonds. As to expression, expressed by the venom duct.

The protein localises to the secreted. The chain is Teretoxin Tan22.12 from Terebra anilis (Auger snail).